Consider the following 195-residue polypeptide: dCTP deaminase (195 aa).

DCTP-binding positions include 105-110 (RSSLGR), Asp123, 131-133 (TLE), Gln152, Tyr166, Lys173, and Gln177. The Proton donor/acceptor role is filled by Glu133. The interval 159 to 195 (KTPADRPYGAERGSKYQGQSGPQASKIQGDREFGGDQ) is disordered. The span at 160–172 (TPADRPYGAERGS) shows a compositional bias: basic and acidic residues. Residues 174–184 (YQGQSGPQASK) are compositionally biased toward polar residues. Over residues 186–195 (QGDREFGGDQ) the composition is skewed to basic and acidic residues.

This sequence belongs to the dCTP deaminase family. Homotrimer.

It catalyses the reaction dCTP + H2O + H(+) = dUTP + NH4(+). It participates in pyrimidine metabolism; dUMP biosynthesis; dUMP from dCTP (dUTP route): step 1/2. Catalyzes the deamination of dCTP to dUTP. In Haloarcula marismortui (strain ATCC 43049 / DSM 3752 / JCM 8966 / VKM B-1809) (Halobacterium marismortui), this protein is dCTP deaminase.